The following is a 477-amino-acid chain: Cyclin-A1-2 (477 aa).

Belongs to the cyclin family. Cyclin AB subfamily.

This is Cyclin-A1-2 (CYCA1-2) from Oryza sativa subsp. japonica (Rice).